A 320-amino-acid chain; its full sequence is uncharacterized protein (320 aa).

Residues 22 to 86 (KTIGRSSSFD…IRDLNNKTGT (65 aa)) enclose the FHA domain. Residues 242–264 (TDTDTTEEKEEEEEKEEGDDEEG) are disordered.

This is an uncharacterized protein from Saccharomyces cerevisiae (strain ATCC 204508 / S288c) (Baker's yeast).